The following is an 84-amino-acid chain: Small ribosomal subunit protein bS16 (84 aa).

This sequence belongs to the bacterial ribosomal protein bS16 family.

This Ralstonia pickettii (strain 12J) protein is Small ribosomal subunit protein bS16.